Consider the following 343-residue polypeptide: Phosphate acyltransferase (343 aa).

The protein belongs to the PlsX family. In terms of assembly, homodimer. Probably interacts with PlsY.

It is found in the cytoplasm. It catalyses the reaction a fatty acyl-[ACP] + phosphate = an acyl phosphate + holo-[ACP]. It participates in lipid metabolism; phospholipid metabolism. Catalyzes the reversible formation of acyl-phosphate (acyl-PO(4)) from acyl-[acyl-carrier-protein] (acyl-ACP). This enzyme utilizes acyl-ACP as fatty acyl donor, but not acyl-CoA. The chain is Phosphate acyltransferase from Acidovorax sp. (strain JS42).